Consider the following 214-residue polypeptide: Chalcone isomerase-like protein 1 (214 aa).

This sequence belongs to the chalcone isomerase family. Mostly expressed in glandular trichomes (lupulin glands), and, to a lower extent, in cones, cones bracts, leaves, stems and roots.

It is found in the cytoplasm. The enzyme catalyses a chalcone = a flavanone.. Its pathway is secondary metabolite biosynthesis; flavonoid biosynthesis. Involved in the biosynthesis of prenylated phenolics natural products which contribute to the bitter taste of beer and display broad biological activities. Involved in anthocyanin biosynthesis. Polyketide binding proteins (PBP) which reduces the catalytic activities of CHS_H1 and PT1L and prevents demethylxanthohumol (DMX) production, by binding to DMX and naringenin chalcone (NC) to stabilize the chalconoids ring-opened structure. This Humulus lupulus (European hop) protein is Chalcone isomerase-like protein 1.